Consider the following 634-residue polypeptide: Threonine--tRNA ligase (634 aa).

The TGS domain maps to 1–61 (MFEVKLKDGS…DSDCEVQFVK (61 aa)). Positions 242–532 (DHRKIGKEMG…LIEHYAGKFP (291 aa)) are catalytic. Positions 333, 384, and 509 each coordinate Zn(2+).

It belongs to the class-II aminoacyl-tRNA synthetase family. Homodimer. The cofactor is Zn(2+).

The protein localises to the cytoplasm. It catalyses the reaction tRNA(Thr) + L-threonine + ATP = L-threonyl-tRNA(Thr) + AMP + diphosphate + H(+). In terms of biological role, catalyzes the attachment of threonine to tRNA(Thr) in a two-step reaction: L-threonine is first activated by ATP to form Thr-AMP and then transferred to the acceptor end of tRNA(Thr). Also edits incorrectly charged L-seryl-tRNA(Thr). This chain is Threonine--tRNA ligase, found in Finegoldia magna (strain ATCC 29328 / DSM 20472 / WAL 2508) (Peptostreptococcus magnus).